Reading from the N-terminus, the 424-residue chain is Tyrosine--tRNA ligase (424 aa).

L-tyrosine is bound at residue tyrosine 37. Residues 42–51 (PTADSLHLGH) carry the 'HIGH' region motif. Lysine 144 is subject to N6-acetyllysine. Residues tyrosine 175 and glutamine 179 each contribute to the L-tyrosine site. The 'KMSKS' region signature appears at 235–239 (KFGKT). Lysine 238 provides a ligand contact to ATP. One can recognise an S4 RNA-binding domain in the interval 357-414 (ADLMQALVDSELQPSRGQARKTIASNAITINGEKQSDPEYFFKEEDRLFGRFTLLRRG).

Belongs to the class-I aminoacyl-tRNA synthetase family. TyrS type 1 subfamily. Homodimer.

The protein localises to the cytoplasm. It carries out the reaction tRNA(Tyr) + L-tyrosine + ATP = L-tyrosyl-tRNA(Tyr) + AMP + diphosphate + H(+). In terms of biological role, catalyzes the attachment of tyrosine to tRNA(Tyr) in a two-step reaction: tyrosine is first activated by ATP to form Tyr-AMP and then transferred to the acceptor end of tRNA(Tyr). This is Tyrosine--tRNA ligase from Escherichia coli (strain K12 / DH10B).